Reading from the N-terminus, the 238-residue chain is Probable transcriptional regulatory protein YeeN (238 aa).

This sequence belongs to the TACO1 family. YeeN subfamily.

It localises to the cytoplasm. This chain is Probable transcriptional regulatory protein YeeN, found in Escherichia coli (strain UTI89 / UPEC).